Here is a 286-residue protein sequence, read N- to C-terminus: MNINEVINYAKGXNLDTIEALLILELILKTKKELIIANIKKSLTKKEKKLFFDQIDKIEKGIPIHYILQKKEFMGIEFSLNKHVLIPRFDTECLAEEALIQIQQNGFKKILDLCCGSGCIGLSIAYYIRKKVILSDISTKALQIVEKNTKKLKLEKFVEIIHSNLLKCIKGKLDIIITNPPYLNKEELEIKNKIKKEPTKALLGFGKDGLNISRKILNQAKEKLSPNGLIIIESAPWQIKSLKDFAIKKGFSHLKTIYDLEKRARALILGQRDDTSIRNCTFNQDK.

Residues Asp-136 and Asn-179 each coordinate S-adenosyl-L-methionine. 179–182 (NPPY) contributes to the substrate binding site.

Belongs to the protein N5-glutamine methyltransferase family. PrmC subfamily.

It catalyses the reaction L-glutaminyl-[peptide chain release factor] + S-adenosyl-L-methionine = N(5)-methyl-L-glutaminyl-[peptide chain release factor] + S-adenosyl-L-homocysteine + H(+). Functionally, methylates the class 1 translation termination release factors RF1/PrfA and RF2/PrfB on the glutamine residue of the universally conserved GGQ motif. The chain is Release factor glutamine methyltransferase from Borreliella burgdorferi (strain ATCC 35210 / DSM 4680 / CIP 102532 / B31) (Borrelia burgdorferi).